Reading from the N-terminus, the 654-residue chain is Peptide-N(4)-(N-acetyl-beta-glucosaminyl)asparagine amidase (654 aa).

Ala2 is subject to N-acetylalanine. One can recognise a PUB domain in the interval Glu30–Lys91. Residues Arg112–Ser163 are disordered. The segment covering Ser124–Ser163 has biased composition (polar residues). Thr137 is modified (phosphothreonine). Positions 250, 253, 283, and 286 each coordinate Zn(2+). Residue Cys309 is the Nucleophile of the active site. Active-site residues include His336 and Asp353. One can recognise a PAW domain in the interval Glu454–Leu654.

The protein belongs to the transglutaminase-like superfamily. PNGase family. In terms of assembly, component of a complex required to couple retrotranslocation, ubiquitination and deglycosylation composed of NGLY1, SAKS1, AMFR, VCP and RAD23B. Interacts with the proteasome components RAD23B and PSMC1. Interacts with directly with VCP. Interacts with DERL1, bringing it close to the endoplasmic reticulum membrane. Interacts with SAKS1. Requires Zn(2+) as cofactor.

It localises to the cytoplasm. It catalyses the reaction Hydrolysis of an N(4)-(acetyl-beta-D-glucosaminyl)asparagine residue in which the glucosamine residue may be further glycosylated, to yield a (substituted) N-acetyl-beta-D-glucosaminylamine and a peptide containing an aspartate residue.. Its activity is regulated as follows. Inhibited by Z-VAD-fmk, a well-known caspase inhibitor, which inhibits enzyme activity through covalent binding of the carbohydrate to the single Cys-306 residue. Functionally, specifically deglycosylates the denatured form of N-linked glycoproteins in the cytoplasm and assists their proteasome-mediated degradation. Cleaves the beta-aspartyl-glucosamine (GlcNAc) of the glycan and the amide side chain of Asn, converting Asn to Asp. Prefers proteins containing high-mannose over those bearing complex type oligosaccharides. Can recognize misfolded proteins in the endoplasmic reticulum that are exported to the cytosol to be destroyed and deglycosylate them, while it has no activity toward native proteins. Deglycosylation is a prerequisite for subsequent proteasome-mediated degradation of some, but not all, misfolded glycoproteins. In Homo sapiens (Human), this protein is Peptide-N(4)-(N-acetyl-beta-glucosaminyl)asparagine amidase (NGLY1).